Reading from the N-terminus, the 275-residue chain is Hydroxyethylthiazole kinase (275 aa).

Met-53 contributes to the substrate binding site. ATP is bound by residues Arg-128 and Ser-174. Gly-201 lines the substrate pocket.

The protein belongs to the Thz kinase family. Mg(2+) serves as cofactor.

It carries out the reaction 5-(2-hydroxyethyl)-4-methylthiazole + ATP = 4-methyl-5-(2-phosphooxyethyl)-thiazole + ADP + H(+). It participates in cofactor biosynthesis; thiamine diphosphate biosynthesis; 4-methyl-5-(2-phosphoethyl)-thiazole from 5-(2-hydroxyethyl)-4-methylthiazole: step 1/1. Its function is as follows. Catalyzes the phosphorylation of the hydroxyl group of 4-methyl-5-beta-hydroxyethylthiazole (THZ). The polypeptide is Hydroxyethylthiazole kinase (Kineococcus radiotolerans (strain ATCC BAA-149 / DSM 14245 / SRS30216)).